Here is a 224-residue protein sequence, read N- to C-terminus: Claudin-17 (224 aa).

The Cytoplasmic segment spans residues 1 to 7; sequence MAFYPLQ. The chain crosses the membrane as a helical span at residues 8-28; the sequence is IAGLVLGFFGLVGTIGTTLLP. Over 29–81 the chain is Extracellular; sequence QWRVSAFIGSNIIIFERIWEGLWMNCIQQAMVTLQCKFYNSILALPPVLEAAR. The helical transmembrane segment at 82–102 threads the bilayer; it reads ALMCVAVALALVALIIGICGM. At 103–124 the chain is on the cytoplasmic side; sequence KQLQCTGSSERVKAYLLGTSGV. The helical transmembrane segment at 125 to 145 threads the bilayer; the sequence is LFILTGIFVLIPVSWTANIII. Residues 146 to 164 are Extracellular-facing; the sequence is RDFYDPTVHAGQKRELGGA. Residues 165–185 form a helical membrane-spanning segment; that stretch reads LFLGWATAAVLFIGGGLLCGY. Topologically, residues 186-224 are cytoplasmic; the sequence is CCCNRKERWHRYPVPAYRVPQKDNQRNVTVPRKSSTSYV.

The protein belongs to the claudin family. As to quaternary structure, does not form homotypic polymeric strands and it is not sufficient to form tight junctions by its own. Interacts with OCLN. As to expression, expressed at high levels in the kidney and at mucher lower levels in the brain. In the kidney, expression gradually decreases from the proximal tubule downstream to the distal convoluted tubule. Expressed in the thin ascending limb of Henle's loop, as well as in the thick ascending limb of Henle's loop. In the distal convoluted tubules, expressed only in a few tubules. Not detected in the collecting duct. In the brain, expressed in blood vessels (at protein level).

Its subcellular location is the cell junction. It is found in the tight junction. The protein resides in the cell membrane. The enzyme catalyses chloride(in) = chloride(out). It carries out the reaction hydrogencarbonate(in) = hydrogencarbonate(out). It catalyses the reaction bromide(in) = bromide(out). The catalysed reaction is iodide(out) = iodide(in). The enzyme catalyses fluoride(in) = fluoride(out). It carries out the reaction nitrate(in) = nitrate(out). It catalyses the reaction thiocyanate(in) = thiocyanate(out). Its function is as follows. Channel-forming tight junction protein with selectivity for anions, including chloride and hydrogencarbonate, and for solutes smaller than 9 Angstrom in diameter. In the kidney proximal tubule, may be involved in quantitative reabsorption of filtered anions. Does not affect water permeability. This Mus musculus (Mouse) protein is Claudin-17 (Cldn17).